A 544-amino-acid chain; its full sequence is CTP synthase (544 aa).

The amidoligase domain stretch occupies residues 1 to 267; it reads MSKFIFVTGG…GDLLVSRLHL (267 aa). Residue S13 coordinates CTP. S13 is a binding site for UTP. 14–19 serves as a coordination point for ATP; that stretch reads SVGKGI. Y54 contributes to the L-glutamine binding site. D71 is a binding site for ATP. Positions 71 and 141 each coordinate Mg(2+). CTP contacts are provided by residues 148–150, 188–193, and K224; these read DIE and KTKPTQ. UTP contacts are provided by residues 188–193 and K224; that span reads KTKPTQ. Residues 299-534 enclose the Glutamine amidotransferase type-1 domain; the sequence is YVELKDAYYS…INAAKKVIRD (236 aa). Position 354 (G354) interacts with L-glutamine. The active-site Nucleophile; for glutamine hydrolysis is C381. L-glutamine contacts are provided by residues 382–385, E405, and R462; that span reads LGMQ. Active-site residues include H507 and E509.

The protein belongs to the CTP synthase family. As to quaternary structure, homotetramer.

It catalyses the reaction UTP + L-glutamine + ATP + H2O = CTP + L-glutamate + ADP + phosphate + 2 H(+). The catalysed reaction is L-glutamine + H2O = L-glutamate + NH4(+). It carries out the reaction UTP + NH4(+) + ATP = CTP + ADP + phosphate + 2 H(+). Its pathway is pyrimidine metabolism; CTP biosynthesis via de novo pathway; CTP from UDP: step 2/2. With respect to regulation, allosterically activated by GTP, when glutamine is the substrate; GTP has no effect on the reaction when ammonia is the substrate. The allosteric effector GTP functions by stabilizing the protein conformation that binds the tetrahedral intermediate(s) formed during glutamine hydrolysis. Inhibited by the product CTP, via allosteric rather than competitive inhibition. Its function is as follows. Catalyzes the ATP-dependent amination of UTP to CTP with either L-glutamine or ammonia as the source of nitrogen. Regulates intracellular CTP levels through interactions with the four ribonucleotide triphosphates. This chain is CTP synthase, found in Dehalococcoides mccartyi (strain ATCC BAA-2100 / JCM 16839 / KCTC 5957 / BAV1).